The following is a 437-amino-acid chain: MGLPVVAIVGRPNVGKSTIFNRLIGERVAIVEDMPGVTRDRLYGKGEWLTHTFHVIDTGGIEFGETDEILTQMRYQAELAIDEADVIIMIADSRTGVTDADVELSRMLNRTGKPVVLAVNKADNPEMRADIYDFYSLGLGEPFPVSGSHGLGLGDMLEEVCQHFPAEDDEEKRDDVIRVSIIGRPNVGKSSLTNAILGEERVIVSEVAGTTRDAIDTPFERDDQSYVLVDTAGMRKRGKVYETTEKYSVMRAMRSIEDSDVVLVVINGEEGIIEQDKKIAGYAHEAGRGVIIIVNKWDAIEKDDKTMQRFTELIREEFKYLDYAPILYVSAKSKQRVHTILPKVNEVAQAHSMRIPTAVLNDLVTDATIRTPPPSDRGKRLKINYATQATVKPPTFILFVNDPELMHFSYERYIENKIREAFVFEGTPVRIWTRKKT.

EngA-type G domains lie at 4 to 168 (PVVA…PAED) and 177 to 352 (IRVS…QAHS). GTP is bound by residues 10–17 (GRPNVGKS), 57–61 (DTGGI), 120–123 (NKAD), 183–190 (GRPNVGKS), 230–234 (DTAGM), and 295–298 (NKWD). Residues 353–437 (MRIPTAVLND…PVRIWTRKKT (85 aa)) enclose the KH-like domain.

Belongs to the TRAFAC class TrmE-Era-EngA-EngB-Septin-like GTPase superfamily. EngA (Der) GTPase family. Associates with the 50S ribosomal subunit.

In terms of biological role, GTPase that plays an essential role in the late steps of ribosome biogenesis. This chain is GTPase Der, found in Brevibacillus brevis (strain 47 / JCM 6285 / NBRC 100599).